The sequence spans 325 residues: MVRGVEQGGPAMDESSSSSSPSPVSAPAGQAAMTAGGIATVAAVLIVFAALTLAFVLLQCYCDERRRAVTTTSTSGRGRRPRPRRRSGSGGDGGTGGGVDPEVLRSLPVTVYSRSTAAAAAKEEEEEDDDGVECAVCLAELEDGEEARFLPRCGHGFHAECVDMWLGSHSTCPLCRLTVVVPPPPLPPVPPEPPASYTVSLPASVLLGLSDHGAGAVTMTAEGRSTLVIEIPESAASTTPRDAAARSSPSLARLRSLRRLWSFGRQGAAGSTSSCSCATGGDNDDGDVEHGVSVTVAIRAVEAATPARPPEAEAGARTAAAHVRN.

The interval 1–29 (MVRGVEQGGPAMDESSSSSSPSPVSAPAG) is disordered. Low complexity predominate over residues 15 to 28 (SSSSSSPSPVSAPA). Residues 38–58 (IATVAAVLIVFAALTLAFVLL) traverse the membrane as a helical segment. Positions 70-105 (TTTSTSGRGRRPRPRRRSGSGGDGGTGGGVDPEVLR) are disordered. The span at 77–87 (RGRRPRPRRRS) shows a compositional bias: basic residues. Residues 88–99 (GSGGDGGTGGGV) show a composition bias toward gly residues. The segment at 134–176 (CAVCLAELEDGEEARFLPRCGHGFHAECVDMWLGSHSTCPLCR) adopts an RING-type; atypical zinc-finger fold. Disordered regions lie at residues 267–289 (GAAG…GDVE) and 303–325 (AATP…HVRN). Residues 268 to 281 (AAGSTSSCSCATGG) show a composition bias toward low complexity.

Its subcellular location is the cell membrane. The catalysed reaction is S-ubiquitinyl-[E2 ubiquitin-conjugating enzyme]-L-cysteine + [acceptor protein]-L-lysine = [E2 ubiquitin-conjugating enzyme]-L-cysteine + N(6)-ubiquitinyl-[acceptor protein]-L-lysine.. It participates in protein modification; protein ubiquitination. Functionally, functions as an E3 ubiquitin-protein ligase in cooperation with the E2 ubiquitin conjugating enzymes UBC5A and UBC5B. Involved in root development. Required for the maintenance of cell viability after the initiation of root primordial formation. May mediate the degradation of cytotoxic proteins produced in root cells after the actions of auxin, cytokinin and jasmonic acid. Mediates 'Lys-48'-linked polyubiquitination of MBP in vitro. In Oryza sativa subsp. japonica (Rice), this protein is E3 ubiquitin-protein ligase EL5 (EL5.1).